We begin with the raw amino-acid sequence, 166 residues long: Desiccation-related protein At2g46140 (166 aa).

It belongs to the LEA type 2 family.

The sequence is that of Desiccation-related protein At2g46140 from Arabidopsis thaliana (Mouse-ear cress).